A 450-amino-acid chain; its full sequence is Glucose-6-phosphate isomerase (450 aa).

Glu-290 (proton donor) is an active-site residue. Catalysis depends on residues His-311 and Lys-425.

This sequence belongs to the GPI family.

It is found in the cytoplasm. The catalysed reaction is alpha-D-glucose 6-phosphate = beta-D-fructose 6-phosphate. It functions in the pathway carbohydrate biosynthesis; gluconeogenesis. The protein operates within carbohydrate degradation; glycolysis; D-glyceraldehyde 3-phosphate and glycerone phosphate from D-glucose: step 2/4. Functionally, catalyzes the reversible isomerization of glucose-6-phosphate to fructose-6-phosphate. The sequence is that of Glucose-6-phosphate isomerase from Leuconostoc mesenteroides subsp. mesenteroides (strain ATCC 8293 / DSM 20343 / BCRC 11652 / CCM 1803 / JCM 6124 / NCDO 523 / NBRC 100496 / NCIMB 8023 / NCTC 12954 / NRRL B-1118 / 37Y).